Consider the following 335-residue polypeptide: Probable nicotianamine synthase 2 (335 aa).

This sequence belongs to the nicotianamine synthase (NAS)-like family.

The catalysed reaction is 3 S-adenosyl-L-methionine = nicotianamine + 3 S-methyl-5'-thioadenosine + 3 H(+). In terms of biological role, synthesizes nicotianamine, a polyamine that is the first intermediate in the synthesis of the phytosiderophores of the mugineic acid type found in gramineae which serves as a sensor for the physiological iron status within the plant, and/or might be involved in the transport of iron. The sequence is that of Probable nicotianamine synthase 2 (NAS2) from Hordeum vulgare (Barley).